Reading from the N-terminus, the 265-residue chain is Cell division protein FtsQ (265 aa).

Positions 1-13 (MAGATTAKGGARR) are enriched in low complexity. The disordered stretch occupies residues 1–25 (MAGATTAKGGARRTPPPGPPPPALK). Over 1–35 (MAGATTAKGGARRTPPPGPPPPALKARRRLRLPRR) the chain is Cytoplasmic. The span at 14–23 (TPPPGPPPPA) shows a compositional bias: pro residues. The helical transmembrane segment at 36–58 (RTLLVTGVATALLGSGVTWLLYG) threads the bilayer. The Extracellular portion of the chain corresponds to 59–265 (SSWLRVEQVA…APTAPAVTHS (207 aa)). One can recognise a POTRA domain in the interval 62 to 131 (LRVEQVAVSG…DTIAVRVTER (70 aa)).

The protein belongs to the FtsQ/DivIB family. FtsQ subfamily.

It is found in the cell membrane. Its function is as follows. Essential cell division protein. The chain is Cell division protein FtsQ from Streptomyces bingchenggensis (strain BCW-1).